The following is a 349-amino-acid chain: MSASASLPVTRAAAAPRITVLFSTEKPNANTNPYLTQLYDALPDAVQPRFFSMREALLSRYDVLHLHWPEYLLRHPSKMGTLAKQACAALLLMKLQLTGTPVVRTLHNLAPHEDRGWRERALLRWIDQLTRRWIRINATTPVRPPFTDTILHGHYRDWFATMEQGTTVPGRLLHFGLIRPYKGVEVLLDVMRDVQDPRLSLRIVGNPATPQMRTLVETACAQDARISALLAYVEEPVLAREVSACELVVLPYKQMHNSGTLLLALSLARPVLAPWSESNAAIAEEVGPGWVFLYEGEFDAALLSGMLDQVRAAPRGPAPDLSQRDWPRIGQLHYRTYLEALGKDGDAAL.

The N-terminal stretch at 1–14 (MSASASLPVTRAAA) is a signal peptide.

This sequence belongs to the glycosyltransferase 94 family.

It is found in the cell inner membrane. The enzyme catalyses beta-D-GlcA-(1-&gt;2)-alpha-D-Man-(1-&gt;3)-beta-D-Glc-(1-&gt;4)-alpha-D-Glc-di-trans,octa-cis-undecaprenyl diphosphate + GDP-alpha-D-mannose = beta-D-Man-(1-&gt;4)-beta-D-GlcA-(1-&gt;2)-alpha-D-Man-(1-&gt;3)-beta-D-Glc-(1-&gt;4)-alpha-D-Glc-di-trans,octa-cis-undecaprenyl diphosphate + GDP + H(+). Its pathway is glycan biosynthesis; xanthan biosynthesis. Functionally, nonprocessive beta-mannosyltransferase that catalyzes the transfer of a mannose residue from GDP-mannose to glucuronic acid-beta-1,2-mannose-alpha-1,3-glucose-beta-1,4-glucose-PP-polyisoprenyl to form the lipid-linked pentasaccharide repeating unit of xanthan, Man-GlcA-Man-Glc(2)-PP-Pol. Is involved in the biosynthesis of the exopolysaccharide xanthan. The protein is GDP-mannose:glycolipid 4-beta-D-mannosyltransferase (gumI) of Xanthomonas campestris pv. campestris (strain ATCC 33913 / DSM 3586 / NCPPB 528 / LMG 568 / P 25).